A 101-amino-acid polypeptide reads, in one-letter code: Large ribosomal subunit protein bL21 (101 aa).

Belongs to the bacterial ribosomal protein bL21 family. In terms of assembly, part of the 50S ribosomal subunit. Contacts protein L20.

Functionally, this protein binds to 23S rRNA in the presence of protein L20. The chain is Large ribosomal subunit protein bL21 from Corynebacterium glutamicum (strain R).